A 130-amino-acid polypeptide reads, in one-letter code: Small ribosomal subunit protein uS8 (130 aa).

The protein belongs to the universal ribosomal protein uS8 family. In terms of assembly, part of the 30S ribosomal subunit. Contacts proteins S5 and S12.

Functionally, one of the primary rRNA binding proteins, it binds directly to 16S rRNA central domain where it helps coordinate assembly of the platform of the 30S subunit. The chain is Small ribosomal subunit protein uS8 from Idiomarina loihiensis (strain ATCC BAA-735 / DSM 15497 / L2-TR).